The sequence spans 173 residues: Methylated-DNA--protein-cysteine methyltransferase (173 aa).

Cys143 (nucleophile; methyl group acceptor) is an active-site residue.

Belongs to the MGMT family.

Its subcellular location is the cytoplasm. The catalysed reaction is a 6-O-methyl-2'-deoxyguanosine in DNA + L-cysteinyl-[protein] = S-methyl-L-cysteinyl-[protein] + a 2'-deoxyguanosine in DNA. It carries out the reaction a 4-O-methyl-thymidine in DNA + L-cysteinyl-[protein] = a thymidine in DNA + S-methyl-L-cysteinyl-[protein]. Involved in the cellular defense against the biological effects of O6-methylguanine (O6-MeG) and O4-methylthymine (O4-MeT) in DNA. Repairs the methylated nucleobase in DNA by stoichiometrically transferring the methyl group to a cysteine residue in the enzyme. This is a suicide reaction: the enzyme is irreversibly inactivated. This chain is Methylated-DNA--protein-cysteine methyltransferase, found in Pyrococcus sp. (strain NA2).